The chain runs to 413 residues: L-methionine gamma-lyase (413 aa).

Residues Tyr75 to Arg77 and Gly105 to Met106 contribute to the pyridoxal 5'-phosphate site. Residue Tyr131 participates in substrate binding. Ser218–Thr220 contributes to the pyridoxal 5'-phosphate binding site. N6-(pyridoxal phosphate)lysine is present on Lys221. Arg365 contacts substrate. Positions Arg388–Arg413 are disordered.

This sequence belongs to the trans-sulfuration enzymes family. Homotetramer; dimer of active dimers. Requires pyridoxal 5'-phosphate as cofactor.

The catalysed reaction is L-methionine + H2O = methanethiol + 2-oxobutanoate + NH4(+). It catalyses the reaction L-homocysteine + H2O = 2-oxobutanoate + hydrogen sulfide + NH4(+) + H(+). The enzyme catalyses L-cysteine + H2O = hydrogen sulfide + pyruvate + NH4(+) + H(+). Its function is as follows. Catalyzes the alpha,gamma-elimination of L-methionine to produce methanethiol, 2-oxobutanoate and ammonia. Is probably involved in L-methionine catabolism. Is also able to catalyze the alpha,gamma-elimination of L-homocysteine, and, to a lesser extent, the alpha,beta-elimination of L-cysteine. This is L-methionine gamma-lyase from Streptomyces avermitilis (strain ATCC 31267 / DSM 46492 / JCM 5070 / NBRC 14893 / NCIMB 12804 / NRRL 8165 / MA-4680).